The sequence spans 901 residues: Protein translocase subunit SecA (901 aa).

Residues Gln87, Gly105 to Thr109, and Asp512 contribute to the ATP site. 4 residues coordinate Zn(2+): Cys885, Cys887, Cys896, and His897.

It belongs to the SecA family. Monomer and homodimer. Part of the essential Sec protein translocation apparatus which comprises SecA, SecYEG and auxiliary proteins SecDF-YajC and YidC. The cofactor is Zn(2+).

Its subcellular location is the cell inner membrane. It is found in the cytoplasm. The enzyme catalyses ATP + H2O + cellular proteinSide 1 = ADP + phosphate + cellular proteinSide 2.. In terms of biological role, part of the Sec protein translocase complex. Interacts with the SecYEG preprotein conducting channel. Has a central role in coupling the hydrolysis of ATP to the transfer of proteins into and across the cell membrane, serving both as a receptor for the preprotein-SecB complex and as an ATP-driven molecular motor driving the stepwise translocation of polypeptide chains across the membrane. The chain is Protein translocase subunit SecA from Salmonella arizonae (strain ATCC BAA-731 / CDC346-86 / RSK2980).